A 692-amino-acid chain; its full sequence is Protein artemis (692 aa).

T380 is modified (phosphothreonine). The residue at position 385 (S385) is a Phosphoserine. 2 disordered regions span residues 503–555 and 640–660; these read RLEN…DSQS and STNA…PEAE. Polar residues predominate over residues 507–520; it reads FPSSTEAGGSQSPK. A compositionally biased stretch (low complexity) spans 530-543; it reads THISSQNSSQSTHI. Polar residues-rich tracts occupy residues 544–555 and 640–650; these read TEQGSQGWDSQS and STNADSQSSSD. S645 is subject to Phosphoserine; by ATM.

Belongs to the DNA repair metallo-beta-lactamase (DRMBL) family. In terms of assembly, interacts with LIG4; the interaction is direct. Interacts with ATM. Interacts with BRCA1. Interacts with PRKDC. Interacts with TP53BP1. Also exhibits ATM- and phosphorylation-dependent interaction with the MRN complex, composed of MRE11, RAD50, and NBN. Post-translationally, phosphorylation on undefined residues by PRKDC may stimulate endonucleolytic activity on 5' and 3' hairpins and overhangs. PRKDC must remain present, even after phosphorylation, for efficient hairpin opening. Also phosphorylated by ATM in response to ionizing radiation (IR) and by ATR in response to ultraviolet (UV) radiation.

Its subcellular location is the nucleus. Its function is as follows. Required for V(D)J recombination, the process by which exons encoding the antigen-binding domains of immunoglobulins and T-cell receptor proteins are assembled from individual V, (D), and J gene segments. V(D)J recombination is initiated by the lymphoid specific RAG endonuclease complex, which generates site specific DNA double strand breaks (DSBs). These DSBs present two types of DNA end structures: hairpin sealed coding ends and phosphorylated blunt signal ends. These ends are independently repaired by the non homologous end joining (NHEJ) pathway to form coding and signal joints respectively. This protein exhibits single-strand specific 5'-3' exonuclease activity in isolation, and acquires endonucleolytic activity on 5' and 3' hairpins and overhangs when in a complex with PRKDC. The latter activity is required specifically for the resolution of closed hairpins prior to the formation of the coding joint. May also be required for the repair of complex DSBs induced by ionizing radiation, which require substantial end-processing prior to religation by NHEJ. This is Protein artemis (DCLRE1C) from Pongo abelii (Sumatran orangutan).